The sequence spans 129 residues: Large ribosomal subunit protein bL20 (129 aa).

Belongs to the bacterial ribosomal protein bL20 family.

Binds directly to 23S ribosomal RNA and is necessary for the in vitro assembly process of the 50S ribosomal subunit. It is not involved in the protein synthesizing functions of that subunit. The sequence is that of Large ribosomal subunit protein bL20 from Mycobacterium sp. (strain JLS).